We begin with the raw amino-acid sequence, 134 residues long: Ion transport peptide-like (134 aa).

Disulfide bonds link Cys-62–Cys-98, Cys-78–Cys-94, and Cys-81–Cys-107.

Belongs to the arthropod CHH/MIH/GIH/VIH hormone family.

The protein localises to the secreted. This Schistocerca gregaria (Desert locust) protein is Ion transport peptide-like.